Consider the following 1356-residue polypeptide: DNA-directed RNA polymerase subunit beta (1356 aa).

This sequence belongs to the RNA polymerase beta chain family. As to quaternary structure, the RNAP catalytic core consists of 2 alpha, 1 beta, 1 beta' and 1 omega subunit. When a sigma factor is associated with the core the holoenzyme is formed, which can initiate transcription.

The catalysed reaction is RNA(n) + a ribonucleoside 5'-triphosphate = RNA(n+1) + diphosphate. Its function is as follows. DNA-dependent RNA polymerase catalyzes the transcription of DNA into RNA using the four ribonucleoside triphosphates as substrates. This is DNA-directed RNA polymerase subunit beta from Phenylobacterium zucineum (strain HLK1).